A 2360-amino-acid chain; its full sequence is Nucleoprotein TPR (2360 aa).

The residue at position 2 (Ala2) is an N-acetylalanine. Residues 3–13 (AVLQQVLERPE) are sufficient for interaction with TPR. Residues 14 to 117 (LNKLPKSTQN…GIQSQFTRAK (104 aa)) are necessary for interaction with HSF1. Residues 24-370 (KLEKFLAEQQ…SATKRKGAIL (347 aa)) are a coiled coil. N6-acetyllysine is present on residues Lys252, Lys312, and Lys345. Ser379 carries the post-translational modification Phosphoserine. Residues 423 to 603 (LDEIVKEVEA…RESRQHQMQL (181 aa)) adopt a coiled-coil conformation. Lys428, Lys457, and Lys477 each carry N6-acetyllysine. Positions 437-513 (LKRQREEYER…LMELEEARGN (77 aa)) are necessary for association to the NPC. Phosphoserine is present on residues Ser522, Ser523, and Ser632. Positions 664–1172 (ETIEAKAALK…IEKLSDKVVT (509 aa)) form a coiled coil. N6-acetyllysine occurs at positions 713, 723, 748, and 755. Positions 915-924 (LASQSTQRTG) are enriched in polar residues. The segment at 915-939 (LASQSTQRTGKGQPGDRDDVDDLKS) is disordered. Positions 928–939 (PGDRDDVDDLKS) are enriched in basic and acidic residues. Residues Ser1180 and Ser1185 each carry the phosphoserine modification. 2 coiled-coil regions span residues 1215 to 1420 (EVAQ…LDAK) and 1472 to 1629 (VQEM…QRDE). The interval 1218 to 1320 (QVESLRYRQR…NAELSEKSGM (103 aa)) is necessary for interaction with HSF1. Disordered regions lie at residues 1479-1520 (KDNL…TAQL) and 1618-1673 (EHQE…PTPV). 2 stretches are compositionally biased toward basic and acidic residues: residues 1503-1512 (LSEKETEARS) and 1618-1630 (EHQE…RDEP). Residues 1632-1651 (EPTNKAPEQQRQITLKTTPA) show a composition bias toward polar residues. Lys1689 carries the post-translational modification N6-acetyllysine. Thr1691 is modified (phosphothreonine). The span at 1801 to 1826 (QSSPVERPSTSTAVFGTVSATPSSSL) shows a compositional bias: polar residues. Residues 1801–2122 (QSSPVERPST…TPGIGGMQQH (322 aa)) are disordered. The interval 1811–1866 (STAVFGTVSATPSSSLPKRAREEEEDSTIEAGDQVSDDTVEMPLPKKLKTVTPVGT) is sufficient and essential for mediating its nuclear import. Acidic residues predominate over residues 1866 to 1880 (TEEEVMAEESTDGEA). Residues 1881–1892 (ETQTYNQDSQDS) are compositionally biased toward polar residues. A Phosphoserine modification is found at Ser1892. Positions 1923 to 1934 (QSDQQTTSSQDG) are enriched in low complexity. 2 stretches are compositionally biased toward acidic residues: residues 1945-1986 (DSDD…EDSN) and 1996-2017 (DGYE…ETEE). Over residues 2023–2061 (ESNQRAADSQNSGEGNTSAAESSFSQEVAREQQPTSASE) the composition is skewed to polar residues. Ser2031, Ser2034, Ser2045, Ser2047, and Ser2070 each carry phosphoserine. Residues Arg2103 and Arg2108 each carry the omega-N-methylarginine modification. Phosphothreonine is present on residues Thr2113 and Thr2134. The residue at position 2152 (Ser2152) is a Phosphoserine. The residue at position 2160 (Arg2160) is an Omega-N-methylarginine. Residues 2224-2241 (ESTTSDASEHASQSVPMV) show a composition bias toward polar residues. Residues 2224–2360 (ESTTSDASEH…RGGINRGNIN (137 aa)) form a disordered region. Residues 2242 to 2254 (TTSTGTLSTTNET) are compositionally biased toward low complexity. Composition is skewed to acidic residues over residues 2256–2269 (AGDD…ETES) and 2282–2296 (SQQE…DESD). A compositionally biased stretch (low complexity) spans 2297 to 2317 (LPSTSQDPPSSSSVDTSSSQP). Arg2340, Arg2342, and Arg2351 each carry asymmetric dimethylarginine. Residues 2349-2360 (GGRGGINRGNIN) are compositionally biased toward gly residues.

The protein belongs to the TPR family. As to quaternary structure, homodimer. Part of the nuclear pore complex (NPC). Associates with the XPO1/CRM1-mediated nuclear export complex, the Importin alpha/Importin beta receptor and the dynein 1 complex. Interacts (via C-terminal domain) with the KPNB1; the interaction occurs in a RanGTP-dependent manner. Interacts (via C-terminal region and phosphorylated form) with MAPK1/ERK2 (via phosphorylated form); the interaction requires dimerization of MAPK1/ERK2 and increases following EGF stimulation. Interacts with MAPK3/ERK1; the interaction increases following EGF stimulation. Interacts (via coiled coil region) with NUP153; the interaction is direct. Interacts with HSF1; the interaction increases in a stress-responsive manner and stimulates export of stress-induced HSP70 mRNA. Interacts with huntingtin/HTT; the interaction is inhibited by aggregated huntingtin/HTT forms with expanded polyglutamine stretch. Interacts with MAD1L1 (via N-terminal region), MAD2L1, and TTK; the interactions occurs in a microtubule-independent manner. Interacts (via middle region) with DYNLL1. Interacts with DCTN1, dynein, NUP153 and tubulin. Interacts with IFI204 (via C-terminal region). Interacts with IFI203. Interacts with MTA1. Interacts with ZC3HC1; this interaction mediates ZC3HC1 nuclear envelopes (NE)-association but also required for proper positioning of a substantial amount of TPR at the nuclear basket (NB). Phosphorylated. Phosphorylation occurs on serine and threonine residues (comprised in the C-terminal region) by MAPK1/ERK2 and stabilizes the interaction between these two proteins.

It is found in the nucleus. The protein resides in the nucleus membrane. It localises to the nucleus envelope. The protein localises to the nuclear pore complex. Its subcellular location is the cytoplasm. It is found in the cytoskeleton. The protein resides in the spindle. It localises to the chromosome. The protein localises to the centromere. Its subcellular location is the kinetochore. Component of the nuclear pore complex (NPC), a complex required for the trafficking across the nuclear envelope. Functions as a scaffolding element in the nuclear phase of the NPC essential for normal nucleocytoplasmic transport of proteins and mRNAs, plays a role in the establishment of nuclear-peripheral chromatin compartmentalization in interphase, and in the mitotic spindle checkpoint signaling during mitosis. Involved in the quality control and retention of unspliced mRNAs in the nucleus; in association with NUP153, regulates the nuclear export of unspliced mRNA species bearing constitutive transport element (CTE) in a NXF1- and KHDRBS1-independent manner. Negatively regulates both the association of CTE-containing mRNA with large polyribosomes and translation initiation. Does not play any role in Rev response element (RRE)-mediated export of unspliced mRNAs. Implicated in nuclear export of mRNAs transcribed from heat shock gene promoters; associates both with chromatin in the HSP70 promoter and with mRNAs transcribed from this promoter under stress-induced conditions. Modulates the nucleocytoplasmic transport of activated MAPK1/ERK2 and huntingtin/HTT and may serve as a docking site for the XPO1/CRM1-mediated nuclear export complex. Also plays a role as a structural and functional element of the perinuclear chromatin distribution; involved in the formation and/or maintenance of NPC-associated perinuclear heterochromatin exclusion zones (HEZs). Finally, acts as a spatial regulator of the spindle-assembly checkpoint (SAC) response ensuring a timely and effective recruitment of spindle checkpoint proteins like MAD1L1 and MAD2L1 to unattached kinetochore during the metaphase-anaphase transition before chromosome congression. Its N-terminus is involved in activation of oncogenic kinases. Plays a role in the regulation of nuclear protein export. The protein is Nucleoprotein TPR of Rattus norvegicus (Rat).